Consider the following 494-residue polypeptide: 4-trimethylaminobutyraldehyde dehydrogenase (494 aa).

An N-acetylserine modification is found at serine 2. Residue lysine 30 is modified to N6-acetyllysine; alternate. Lysine 30 bears the N6-succinyllysine; alternate mark. The residue at position 59 (lysine 59) is an N6-succinyllysine. NAD(+) is bound by residues lysine 180 and 232 to 236; that span reads GSVPT. Glutamate 254 functions as the Proton acceptor in the catalytic mechanism. The Nucleophile role is filled by cysteine 288. Lysine 298 is subject to N6-acetyllysine. Lysine 303 is modified (N6-acetyllysine; alternate). Lysine 303 is modified (N6-succinyllysine; alternate). Lysine 344 carries the N6-acetyllysine modification. Residue glutamate 391 coordinates NAD(+).

Belongs to the aldehyde dehydrogenase family. Homotetramer.

Its subcellular location is the cytoplasm. The protein localises to the cytosol. The catalysed reaction is 4-(trimethylamino)butanal + NAD(+) + H2O = 4-(trimethylamino)butanoate + NADH + 2 H(+). It catalyses the reaction an aldehyde + NAD(+) + H2O = a carboxylate + NADH + 2 H(+). The enzyme catalyses 4-aminobutanal + NAD(+) + H2O = 4-aminobutanoate + NADH + 2 H(+). It carries out the reaction formaldehyde + NAD(+) + H2O = formate + NADH + 2 H(+). The catalysed reaction is acetaldehyde + NAD(+) + H2O = acetate + NADH + 2 H(+). It catalyses the reaction imidazole-4-acetaldehyde + NAD(+) + H2O = imidazole-4-acetate + NADH + 2 H(+). The enzyme catalyses acrolein + NAD(+) + H2O = acrylate + NADH + 2 H(+). It carries out the reaction (5-hydroxyindol-3-yl)acetaldehyde + NAD(+) + H2O = (5-hydroxyindol-3-yl)acetate + NADH + 2 H(+). The catalysed reaction is 3,4-dihydroxyphenylacetaldehyde + NAD(+) + H2O = 3,4-dihydroxyphenylacetate + NADH + 2 H(+). It catalyses the reaction spermine monoaldehyde + NAD(+) + H2O = N-(2-carboxyethyl)spermidine + NADH + 2 H(+). The enzyme catalyses propanal + NAD(+) + H2O = propanoate + NADH + 2 H(+). It carries out the reaction butanal + NAD(+) + H2O = butanoate + NADH + 2 H(+). The catalysed reaction is pentanal + NAD(+) + H2O = pentanoate + NADH + 2 H(+). It catalyses the reaction hexanal + NAD(+) + H2O = hexanoate + NADH + 2 H(+). The protein operates within amine and polyamine biosynthesis; carnitine biosynthesis. In terms of biological role, converts gamma-trimethylaminobutyraldehyde into gamma-butyrobetaine with high efficiency (in vitro). Can catalyze the irreversible oxidation of a broad range of aldehydes to the corresponding acids in an NAD-dependent reaction, but with low efficiency. Catalyzes the oxidation of aldehydes arising from biogenic amines and polyamines. The chain is 4-trimethylaminobutyraldehyde dehydrogenase (ALDH9A1) from Pongo abelii (Sumatran orangutan).